The sequence spans 389 residues: Chalcone synthase 1 (389 aa).

The active site involves C164.

This sequence belongs to the thiolase-like superfamily. Chalcone/stilbene synthases family.

It catalyses the reaction (E)-4-coumaroyl-CoA + 3 malonyl-CoA + 3 H(+) = 2',4,4',6'-tetrahydroxychalcone + 3 CO2 + 4 CoA. Its pathway is secondary metabolite biosynthesis; flavonoid biosynthesis. Functionally, the primary product of this enzyme is 4,2',4',6'-tetrahydroxychalcone (also termed naringenin-chalcone or chalcone) which can under specific conditions spontaneously isomerize into naringenin. In Trifolium subterraneum (Subterranean clover), this protein is Chalcone synthase 1 (CHS1).